Reading from the N-terminus, the 90-residue chain is Serine protease inhibitor kazal-like protein, minor form (90 aa).

The first 23 residues, 1 to 23 (MSSTWIKFLFILTLVLLPYSVFS), serve as a signal peptide directing secretion. Positions 33–89 (VIKEPNCTMYKSKSECSNIAENPVCADDRNTYYNECYFCIEKVVEKLKYRYHGICIY) constitute a Kazal-like domain. N-linked (GlcNAc...) asparagine glycosylation occurs at asparagine 38.

In terms of tissue distribution, luminal fluid and mucosal folds of the seminal vesicles (at protein level). Not detected in brain, heart, lung, liver, kidney, stomach, small intestine, muscle, skin, thymus, placenta or bladder.

It is found in the secreted. Does not function as an inhibitor of trypsin, chymotrypsin, subtilisin or elastase. Binds sperm and enhances sperm motility. May act as a decapacitation factor, suppresses BSA-stimulated sperm capacitation and blocks sperm-oocyte interactions in vitro. This Mus musculus (Mouse) protein is Serine protease inhibitor kazal-like protein, minor form (Spinkl).